A 95-amino-acid polypeptide reads, in one-letter code: Large ribosomal subunit protein bL28 (95 aa).

Belongs to the bacterial ribosomal protein bL28 family.

The sequence is that of Large ribosomal subunit protein bL28 from Dinoroseobacter shibae (strain DSM 16493 / NCIMB 14021 / DFL 12).